We begin with the raw amino-acid sequence, 85 residues long: U4-theraphotoxin-Hhn1a (85 aa).

The N-terminal stretch at 1–22 (MKMTLIAILTCAAVLVLHTTAA) is a signal peptide. Positions 23–48 (EELEAESQLMEVGMPDTELEAVDEER) are excised as a propeptide. 3 disulfide bridges follow: Cys-52–Cys-66, Cys-56–Cys-77, and Cys-71–Cys-82.

It belongs to the neurotoxin 12 (Hwtx-2) family. 02 (Hwtx-2) subfamily. As to quaternary structure, monomer. As to expression, expressed by the venom gland.

The protein resides in the secreted. Its function is as follows. Neurotoxin active on both insects and mammals. In Cyriopagopus hainanus (Chinese bird spider), this protein is U4-theraphotoxin-Hhn1a.